The primary structure comprises 683 residues: Acetyl-coenzyme A synthetase 2 (683 aa).

Residues arginine 206–lysine 209 and threonine 325 each bind CoA. ATP contacts are provided by residues glycine 401 to proline 403 and aspartate 425 to threonine 430. Aspartate 425–threonine 430 contributes to the AMP binding site. Residue lysine 506 forms a Glycyl lysine isopeptide (Lys-Gly) (interchain with G-Cter in ubiquitin) linkage. Positions 516 and 531 each coordinate ATP. The AMP site is built by aspartate 516 and arginine 531. Serine 539 contacts CoA. Arginine 542 provides a ligand contact to ATP. Arginine 612 contributes to the CoA binding site. At serine 679 the chain carries Phosphoserine.

Belongs to the ATP-dependent AMP-binding enzyme family.

Its subcellular location is the cytoplasm. The protein localises to the nucleus. The enzyme catalyses acetate + ATP + CoA = acetyl-CoA + AMP + diphosphate. It participates in carbohydrate metabolism; pyruvate metabolism. Functionally, catalyzes the production of acetyl-CoA. Provides the acetyl-CoA source for histone acetylation in the nucleus. 'Anaerobic' isozyme of acetyl-coenzyme A synthetase, which is required for growth on fermentable carbon sources such as glucose. May be involved in the PDH (pyruvate dehydrogenase complex) bypass. This is Acetyl-coenzyme A synthetase 2 from Saccharomyces cerevisiae (strain ATCC 204508 / S288c) (Baker's yeast).